A 147-amino-acid chain; its full sequence is Truncated RecQ DNA helicase-like protein C212.06c (147 aa).

Residues 1-72 (MGVRLVVHYR…CVRSFLASEM (72 aa)) form the Helicase C-terminal domain. The segment at 100-147 (ETPKPAIATHSRYNASFSSSPPPQPGSSSGMSAMNTNTTSTTPVSGKT) is disordered. Over residues 125 to 141 (GSSSGMSAMNTNTTSTT) the composition is skewed to low complexity.

This sequence belongs to the helicase family. RecQ subfamily.

Its function is as follows. Truncated ATP-dependent 3'-5' DNA helicase. The sequence is that of Truncated RecQ DNA helicase-like protein C212.06c from Schizosaccharomyces pombe (strain 972 / ATCC 24843) (Fission yeast).